The chain runs to 277 residues: Co-chaperone protein DjlA (277 aa).

Over 1 to 6 the chain is Periplasmic; it reads MRYWGK. A helical transmembrane segment spans residues 7–31; that stretch reads LLGLVLGVMYAPGVVGALLGLLVGH. The Cytoplasmic segment spans residues 32–277; it reads MVDRALGAKR…DLIKREKGFK (246 aa). The region spanning 211–277 is the J domain; it reads DACKVLGVNS…DLIKREKGFK (67 aa).

Homodimer.

It localises to the cell inner membrane. Functionally, regulatory DnaK co-chaperone. Direct interaction between DnaK and DjlA is needed for the induction of the wcaABCDE operon, involved in the synthesis of a colanic acid polysaccharide capsule, possibly through activation of the RcsB/RcsC phosphotransfer signaling pathway. The colanic acid capsule may help the bacterium survive conditions outside the host. This chain is Co-chaperone protein DjlA, found in Yersinia pseudotuberculosis serotype I (strain IP32953).